We begin with the raw amino-acid sequence, 137 residues long: Large ribosomal subunit protein uL16 (137 aa).

Residues 1-13 (MLQPKRRKYRKEQ) show a composition bias toward basic residues. The segment at 1 to 22 (MLQPKRRKYRKEQKGRNTGVAT) is disordered.

The protein belongs to the universal ribosomal protein uL16 family. In terms of assembly, part of the 50S ribosomal subunit.

In terms of biological role, binds 23S rRNA and is also seen to make contacts with the A and possibly P site tRNAs. The chain is Large ribosomal subunit protein uL16 from Polynucleobacter asymbioticus (strain DSM 18221 / CIP 109841 / QLW-P1DMWA-1) (Polynucleobacter necessarius subsp. asymbioticus).